The primary structure comprises 56 residues: Zinc finger mu-protein HVO_0758 (56 aa).

Cysteine 23, cysteine 26, cysteine 45, and cysteine 48 together coordinate Zn(2+). 2 consecutive short sequence motifs (c(P)XCG motif) follow at residues 23–27 and 45–49; these read CSECG and CADCG.

Monomer.

Zinc-binding protein that binds one zinc ion. Is involved in biofilm formation, swarming and glycerol metabolism regulation. The protein is Zinc finger mu-protein HVO_0758 of Haloferax volcanii (strain ATCC 29605 / DSM 3757 / JCM 8879 / NBRC 14742 / NCIMB 2012 / VKM B-1768 / DS2) (Halobacterium volcanii).